Consider the following 307-residue polypeptide: Coproporphyrin III ferrochelatase (307 aa).

Fe-coproporphyrin III contacts are provided by residues Tyr12, Arg29, 45–46, Ser53, and Tyr124; that span reads RY. His181 and Glu263 together coordinate Fe(2+).

This sequence belongs to the ferrochelatase family.

Its subcellular location is the cytoplasm. The enzyme catalyses Fe-coproporphyrin III + 2 H(+) = coproporphyrin III + Fe(2+). It participates in porphyrin-containing compound metabolism; protoheme biosynthesis. In terms of biological role, involved in coproporphyrin-dependent heme b biosynthesis. Catalyzes the insertion of ferrous iron into coproporphyrin III to form Fe-coproporphyrin III. This is Coproporphyrin III ferrochelatase from Staphylococcus aureus (strain MRSA252).